The following is a 494-amino-acid chain: Amidophosphoribosyltransferase (494 aa).

The propeptide occupies 1–10 (MFNYSGLNEE). Catalysis depends on Cys11, which acts as the Nucleophile. The Glutamine amidotransferase type-2 domain maps to 11–231 (CGVFGIWNHP…AGEYVVINDK (221 aa)). Residues Ser294, Asp356, and Asp357 each coordinate Mg(2+).

This sequence in the C-terminal section; belongs to the purine/pyrimidine phosphoribosyltransferase family. Requires Mg(2+) as cofactor.

It carries out the reaction 5-phospho-beta-D-ribosylamine + L-glutamate + diphosphate = 5-phospho-alpha-D-ribose 1-diphosphate + L-glutamine + H2O. It participates in purine metabolism; IMP biosynthesis via de novo pathway; N(1)-(5-phospho-D-ribosyl)glycinamide from 5-phospho-alpha-D-ribose 1-diphosphate: step 1/2. In terms of biological role, catalyzes the formation of phosphoribosylamine from phosphoribosylpyrophosphate (PRPP) and glutamine. This chain is Amidophosphoribosyltransferase, found in Staphylococcus aureus (strain COL).